A 54-amino-acid polypeptide reads, in one-letter code: Small ribosomal subunit protein uS14 (54 aa).

4 residues coordinate Zn(2+): Cys-19, Cys-22, Cys-37, and Cys-40.

Belongs to the universal ribosomal protein uS14 family. Zinc-binding uS14 subfamily. In terms of assembly, part of the 30S ribosomal subunit. It depends on Zn(2+) as a cofactor.

Binds 16S rRNA, required for the assembly of 30S particles. The protein is Small ribosomal subunit protein uS14 of Aeropyrum pernix (strain ATCC 700893 / DSM 11879 / JCM 9820 / NBRC 100138 / K1).